The sequence spans 108 residues: Putative double-stranded DNA mimic protein PBPRA1522 (108 aa).

This sequence belongs to the putative dsDNA mimic protein family.

Functionally, may act as a double-stranded DNA (dsDNA) mimic. Probably regulates the activity of a dsDNA-binding protein. The sequence is that of Putative double-stranded DNA mimic protein PBPRA1522 from Photobacterium profundum (strain SS9).